We begin with the raw amino-acid sequence, 458 residues long: Transmembrane protein adipocyte-associated 1 homolog (458 aa).

N-linked (GlcNAc...) asparagine glycans are attached at residues N21 and N45. The next 7 membrane-spanning stretches (helical) occupy residues V81–I101, A114–M134, I152–F172, I181–I201, F225–L245, L263–I283, and L291–F311. N323 and N324 each carry an N-linked (GlcNAc...) asparagine glycan. Positions R409–M458 are disordered. The segment covering G411–M422 has biased composition (basic and acidic residues).

This sequence belongs to the UPF0359 family.

The protein localises to the membrane. In Caenorhabditis elegans, this protein is Transmembrane protein adipocyte-associated 1 homolog (tpra-1).